Here is a 244-residue protein sequence, read N- to C-terminus: Serine acetyltransferase (244 aa).

It belongs to the transferase hexapeptide repeat family.

The protein localises to the cytoplasm. It catalyses the reaction L-serine + acetyl-CoA = O-acetyl-L-serine + CoA. It participates in amino-acid biosynthesis; L-cysteine biosynthesis; L-cysteine from L-serine: step 1/2. In Synechococcus elongatus (strain ATCC 33912 / PCC 7942 / FACHB-805) (Anacystis nidulans R2), this protein is Serine acetyltransferase (cysE).